A 339-amino-acid polypeptide reads, in one-letter code: Dehydrogenase/reductase SDR family member 7 (339 aa).

The N-terminal stretch at Met-1–Ala-28 is a signal peptide. NAD(+)-binding residues include Ser-60 and Ile-62. Ser-190 is a binding site for substrate. The NAD(+) site is built by Tyr-203, Lys-207, and Ser-239. The Proton acceptor role is filled by Tyr-203.

It belongs to the short-chain dehydrogenases/reductases (SDR) family. In terms of tissue distribution, found predominantly in the adrenal glands, liver, thyroid, prostate, small intestine, colon, stomach, kidney and brain. Lower levels observed in skeletal muscle, the lung and the spleen.

It is found in the endoplasmic reticulum membrane. The catalysed reaction is all-trans-retinol + NADP(+) = all-trans-retinal + NADPH + H(+). The enzyme catalyses 5alpha-androstane-3alpha,17beta-diol + NADP(+) = 17beta-hydroxy-5alpha-androstan-3-one + NADPH + H(+). In terms of biological role, NADPH-dependent oxidoreductase which catalyzes the reduction of a variety of compounds bearing carbonyl groups including steroids, retinoids and xenobiotics. Catalyzes the reduction/inactivation of 5alpha-dihydrotestosterone to 3alpha-androstanediol, with a possible role in the modulation of androgen receptor function. Involved in the reduction of all-trans-retinal to all-trans-retinol. Converts cortisone to 20beta-dihydrocortisone in vitro, although the physiological relevance of this activity is questionable. Reduces exogenous compounds such as quinones (1,2-naphtoquinone, 9,10-phenantrenequinone and benzoquinone) and other xenobiotics (alpha-diketones) in vitro, suggesting a role in the biotransformation of xenobiotics with carbonyl group. A dehydrogenase activity has not been detected so far. May play a role as tumor suppressor. The protein is Dehydrogenase/reductase SDR family member 7 of Homo sapiens (Human).